The following is a 356-amino-acid chain: MQFTALLAALGAPLALAASIPAAAHNHSMIDVQLAATGNSMIKATITNTGDRTLNLLKFNTIMDEHPTRKVMVYQDGAEVQFTGMLPRYKMSDLTPEYFVNLGPKASVEHSFDLAATHDLSRGGKIVVKAHGMVPTAEENATTITGHTLYESNELTMDVDGKQAAAVEQAMGGDDSTGVIDKRSNIVTSSCRGSQLRVLQTALSNSARLSRAAASAAQRNPSKMREYFKTADSRTVQKVASRFLSVARESSSGSTGRTTYYCNDNRGGCHPGVLAYTLPSKNQVFNCPSYYQLPALNNRCHGQDQATTTLHELTHNPAVVTPFCEDLGYGYQRVSALPASKAIQNADTYSLFANGM.

A signal peptide spans 1–17 (MQFTALLAALGAPLALA). Residues 18–183 (ASIPAAAHNH…DDSTGVIDKR (166 aa)) constitute a propeptide that is removed on maturation. Disulfide bonds link C191-C262 and C269-C287. A Zn(2+)-binding site is contributed by H311. Residue E312 is part of the active site. Residues H315 and D326 each coordinate Zn(2+).

The protein belongs to the peptidase M35 family. The cofactor is Zn(2+).

It is found in the secreted. It carries out the reaction Preferential cleavage of bonds with hydrophobic residues in P1'. Also 3-Asn-|-Gln-4 and 8-Gly-|-Ser-9 bonds in insulin B chain.. Functionally, probable secreted metalloprotease that shows high activities on basic nuclear substrates such as histone and protamine. May be involved in virulence. This chain is Probable neutral protease 2 homolog TRV_06370, found in Trichophyton verrucosum (strain HKI 0517).